Here is a 276-residue protein sequence, read N- to C-terminus: MALKTFNPTSPGRRQLVLVDRSALHKGKPVKALTQGLSSKGGRNNQGRITVRHQGGGVKRLYRQVDFKRTRWDIPATVERLEYDPNRTAFIALIKYQDGELSYIIAPQRLEVGDTVITSATADIKPGNTLPLKSIPVGTIIHNIELKPQKGAQMVRSAGTYAQLVGRDSGYAQIKLASGELRMVLDSCLATIGAVSNPDKMNEVSSKAGRNRHLGKRPTVRGVVMNPVDHPHGGGEGKSSGGRHPVSPWGKKTRGPKTRNNKVTDRLIIRRRNAKR.

A disordered region spans residues 223 to 276 (VVMNPVDHPHGGGEGKSSGGRHPVSPWGKKTRGPKTRNNKVTDRLIIRRRNAKR). A compositionally biased stretch (basic residues) spans 251-260 (KKTRGPKTRN).

Belongs to the universal ribosomal protein uL2 family. As to quaternary structure, part of the 50S ribosomal subunit. Forms a bridge to the 30S subunit in the 70S ribosome.

Its function is as follows. One of the primary rRNA binding proteins. Required for association of the 30S and 50S subunits to form the 70S ribosome, for tRNA binding and peptide bond formation. It has been suggested to have peptidyltransferase activity; this is somewhat controversial. Makes several contacts with the 16S rRNA in the 70S ribosome. This is Large ribosomal subunit protein uL2 from Hyphomonas neptunium (strain ATCC 15444).